A 399-amino-acid chain; its full sequence is Carbamoyl phosphate synthase arginine-specific small chain (399 aa).

The 193-residue stretch at Asp-187–Leu-379 folds into the Glutamine amidotransferase type-1 domain. The Nucleophile role is filled by Cys-267. Catalysis depends on residues His-352 and Glu-354.

Belongs to the CarA family. Heterodimer composed of 2 chains; the small (or glutamine) chain promotes the hydrolysis of glutamine to ammonia, which is used by the large (or ammonia) chain to synthesize carbamoyl phosphate.

It localises to the cytoplasm. It catalyses the reaction hydrogencarbonate + L-glutamine + 2 ATP + H2O = carbamoyl phosphate + L-glutamate + 2 ADP + phosphate + 2 H(+). The catalysed reaction is L-glutamine + H2O = L-glutamate + NH4(+). It participates in amino-acid biosynthesis; L-arginine biosynthesis; carbamoyl phosphate from bicarbonate: step 1/1. Functionally, small subunit of the arginine-specific carbamoyl phosphate synthase (CPSase). CPSase catalyzes the formation of carbamoyl phosphate from the ammonia moiety of glutamine, carbonate, and phosphate donated by ATP, constituting the first step of 2 biosynthetic pathways, one leading to arginine and/or urea and the other to pyrimidine nucleotides. The small subunit (glutamine amidotransferase) binds and cleaves glutamine to supply the large subunit with the substrate ammonia. The sequence is that of Carbamoyl phosphate synthase arginine-specific small chain (CPA1) from Eremothecium gossypii (strain ATCC 10895 / CBS 109.51 / FGSC 9923 / NRRL Y-1056) (Yeast).